Consider the following 272-residue polypeptide: R3H domain-containing protein 4 (272 aa).

The interval 141-167 (LEDEGKSKARRRGPTRGEDRRREDPAY) is disordered. Positions 155–165 (TRGEDRRREDP) are enriched in basic and acidic residues. The R3H domain occupies 191 to 254 (METLETWEER…KRQMKVSNRH (64 aa)).

The protein resides in the nucleus. This is R3H domain-containing protein 4 (R3HDM4) from Bos taurus (Bovine).